A 472-amino-acid chain; its full sequence is MSRRGKIVCTLGPATNSDELILALVEAGMDVARLNFSHGDYADHKAAYERVRVASDATGRAVGVLADLQGPKIRLGRFATGPTYWADGETVRITVADCEGSHDRVSTTYKKLAEDAAVGDRVLVDDGKVCLVVDGIEGDDVICTVVEGGPVSNNKGISLPGMNVSAPALSEKDIEDLTFALDLGVDLVALSFVRSPADVELVHEVMDRVGRRVPVIAKLEKPEAVDNLETIVLAFDAIMVARGDLGVELPLEEVPLVQKRAIQMARENAKPVIVATQMLDSMIENSRPTRAEASDVANAVLDGADAVMLSGETSVGKYPMAAVRTMSRIICAVEDNSTAAPPLTHVPRTKRGVISYAARDIGERLDAKALVAFTQSGDTVKRLARLHTPLPLLAFTAWPEVRSQLAMTWGTETFIVPMMTSTGGMIRQVDKSLLELGRYKRGDLVVIVAGAPPGTVGSTNLIHVHRIGEDDV.

Residue R33 participates in substrate binding. The K(+) site is built by N35, S37, and D67. 35–38 contributes to the ATP binding site; sequence NFSH. 2 residues coordinate ATP: R74 and K155. Mg(2+) is bound at residue E220. G243, D244, and T276 together coordinate substrate. D244 contributes to the Mg(2+) binding site.

It belongs to the pyruvate kinase family. As to quaternary structure, homotetramer. Mg(2+) is required as a cofactor. It depends on K(+) as a cofactor.

It catalyses the reaction pyruvate + ATP = phosphoenolpyruvate + ADP + H(+). Its pathway is carbohydrate degradation; glycolysis; pyruvate from D-glyceraldehyde 3-phosphate: step 5/5. The chain is Pyruvate kinase (pyk) from Mycobacterium intracellulare.